Reading from the N-terminus, the 83-residue chain is Sec-independent protein translocase protein TatA (83 aa).

Residues 1 to 21 (MGSFSIWHWLIVLLIVVMVFG) form a helical membrane-spanning segment. The interval 44–83 (KDGGQSAAATDDKPAAPAGQVTNAQASDKTTIDVEARQKS) is disordered. The span at 63–72 (QVTNAQASDK) shows a compositional bias: polar residues. Basic and acidic residues predominate over residues 73 to 83 (TTIDVEARQKS).

Belongs to the TatA/E family. The Tat system comprises two distinct complexes: a TatABC complex, containing multiple copies of TatA, TatB and TatC subunits, and a separate TatA complex, containing only TatA subunits. Substrates initially bind to the TatABC complex, which probably triggers association of the separate TatA complex to form the active translocon.

It localises to the cell inner membrane. Functionally, part of the twin-arginine translocation (Tat) system that transports large folded proteins containing a characteristic twin-arginine motif in their signal peptide across membranes. TatA could form the protein-conducting channel of the Tat system. This is Sec-independent protein translocase protein TatA from Polaromonas sp. (strain JS666 / ATCC BAA-500).